The primary structure comprises 555 residues: MKSDIEIARSVELKKIKQVAESIGIPRDEVENYGRYIAKIPEYLIDEEKVKKSNLILVTAITATKAGIGKTTVSIGLALGLNKIGKKAIVALREPSLGPCFGMKGGAAGGGYAQVLPMEKINLHFTGDFHAITSAHNMISALLDNYLYQNQSKGFGLKEILWRRVLDVNDRSLRNIVVGLGPKTNGITQESGFDITPASEIMAILCLSKDVDDLRRRIENILLGYTYDNKPFTVKDLGVAGAITVLLKDAIHPNLVQTTEGTAAFVHGGPFANIAHGCNSILATKMAMTFGDYVITEAGFGADLGAEKFYNIKCRKSGLQPRLTVIVATAQGLKMHGGVSLDRIKEPNLEGLREGLRNLDKHVRNLHSFGQTVIVAFNKFASDTDEEMELLREHCEQLGVGYAINNAFSEGGEGAVDLANLVVETIENKPSEPLQFTYNDEDSVQQKIEKVATNLYGASVVTYSTLTRNKIKLIEEMGIGHYPVCIAKTQYSFSADPKVYGAVDNFELHIKDIVINNGAEMIVAIAGEIMRMPGLPKEPQALHIDIVDGNIEGLS.

Residue Thr-64–Thr-71 coordinates ATP.

It belongs to the formate--tetrahydrofolate ligase family.

The enzyme catalyses (6S)-5,6,7,8-tetrahydrofolate + formate + ATP = (6R)-10-formyltetrahydrofolate + ADP + phosphate. Its pathway is one-carbon metabolism; tetrahydrofolate interconversion. The protein is Formate--tetrahydrofolate ligase of Bacteroides fragilis (strain ATCC 25285 / DSM 2151 / CCUG 4856 / JCM 11019 / LMG 10263 / NCTC 9343 / Onslow / VPI 2553 / EN-2).